The sequence spans 423 residues: UDP-N-acetylglucosamine 1-carboxyvinyltransferase 1 (423 aa).

23–24 (KN) contacts phosphoenolpyruvate. Arg-96 is a UDP-N-acetyl-alpha-D-glucosamine binding site. Catalysis depends on Cys-120, which acts as the Proton donor. Cys-120 is modified (2-(S-cysteinyl)pyruvic acid O-phosphothioketal). UDP-N-acetyl-alpha-D-glucosamine-binding positions include 125–129 (RPIDL), Asp-309, and Val-331.

It belongs to the EPSP synthase family. MurA subfamily.

It is found in the cytoplasm. It carries out the reaction phosphoenolpyruvate + UDP-N-acetyl-alpha-D-glucosamine = UDP-N-acetyl-3-O-(1-carboxyvinyl)-alpha-D-glucosamine + phosphate. The protein operates within cell wall biogenesis; peptidoglycan biosynthesis. Functionally, cell wall formation. Adds enolpyruvyl to UDP-N-acetylglucosamine. The chain is UDP-N-acetylglucosamine 1-carboxyvinyltransferase 1 from Streptococcus mutans serotype c (strain ATCC 700610 / UA159).